Here is an 817-residue protein sequence, read N- to C-terminus: Transcription factor SPT20 homolog-like 2 (817 aa).

A compositionally biased stretch (basic and acidic residues) spans 1–14 (MDRDLEQALDRTEN). 5 disordered regions span residues 1–28 (MDRDLEQALDRTENITEIAQQRRPRRRY), 249–275 (PQQEQSDCPPPPELRVSTSGQKEERKV), 369–553 (PRKK…AAGR), 598–630 (PGSGAPAPAGISGSGLQSSGGPLPDARPGAVQA), and 675–697 (QLQQPTAAHPPQPGPQGSTLGLS). Positions 423 to 440 (SHSSSGPASVSQLSSWKT) are enriched in polar residues. 4 stretches are compositionally biased toward low complexity: residues 469-479 (SSSGKISSGNS), 494-505 (PAAAPAVAAAAP), 513-531 (AAPALAAAAVAAAAGGAAP), and 598-618 (PGSGAPAPAGISGSGLQSSGG).

It belongs to the SPT20 family.

In Homo sapiens (Human), this protein is Transcription factor SPT20 homolog-like 2 (SUPT20HL2).